Here is a 285-residue protein sequence, read N- to C-terminus: GTP-binding protein 8 (285 aa).

Positions 110-283 constitute an EngB-type G domain; it reads QQPEVCFIGR…KCFIADITGS (174 aa). GTP is bound by residues 118 to 125, 147 to 151, 165 to 168, 227 to 230, and 262 to 264; these read GRSNVGKS, GHTKK, DMPG, TKID, and ISA. Mg(2+)-binding residues include Ser125 and Thr149.

Belongs to the TRAFAC class TrmE-Era-EngA-EngB-Septin-like GTPase superfamily. EngB GTPase family. Requires Mg(2+) as cofactor.

In Mus musculus (Mouse), this protein is GTP-binding protein 8 (Gtpbp8).